Here is a 435-residue protein sequence, read N- to C-terminus: Tol-Pal system protein TolB (435 aa).

Positions 1–20 (MRKIIAGVFIFVFLISNLYA) are cleaved as a signal peptide.

It belongs to the TolB family. In terms of assembly, the Tol-Pal system is composed of five core proteins: the inner membrane proteins TolA, TolQ and TolR, the periplasmic protein TolB and the outer membrane protein Pal. They form a network linking the inner and outer membranes and the peptidoglycan layer.

The protein resides in the periplasm. Its function is as follows. Part of the Tol-Pal system, which plays a role in outer membrane invagination during cell division and is important for maintaining outer membrane integrity. The polypeptide is Tol-Pal system protein TolB (Francisella tularensis subsp. tularensis (strain WY96-3418)).